We begin with the raw amino-acid sequence, 209 residues long: Protein-L-isoaspartate O-methyltransferase (209 aa).

Ser-59 is a catalytic residue.

Belongs to the methyltransferase superfamily. L-isoaspartyl/D-aspartyl protein methyltransferase family.

It localises to the cytoplasm. It carries out the reaction [protein]-L-isoaspartate + S-adenosyl-L-methionine = [protein]-L-isoaspartate alpha-methyl ester + S-adenosyl-L-homocysteine. In terms of biological role, catalyzes the methyl esterification of L-isoaspartyl residues in peptides and proteins that result from spontaneous decomposition of normal L-aspartyl and L-asparaginyl residues. It plays a role in the repair and/or degradation of damaged proteins. The polypeptide is Protein-L-isoaspartate O-methyltransferase (Helicobacter pylori (strain G27)).